Here is a 181-residue protein sequence, read N- to C-terminus: Translation initiation factor IF-3 (181 aa).

Belongs to the IF-3 family. Monomer.

Its subcellular location is the cytoplasm. Functionally, IF-3 binds to the 30S ribosomal subunit and shifts the equilibrium between 70S ribosomes and their 50S and 30S subunits in favor of the free subunits, thus enhancing the availability of 30S subunits on which protein synthesis initiation begins. The protein is Translation initiation factor IF-3 of Azotobacter vinelandii.